A 408-amino-acid chain; its full sequence is Hepatocyte nuclear factor 4-gamma (408 aa).

A DNA-binding region (nuclear receptor) is located at residues Asn9 to Asn84. 2 NR C4-type zinc fingers span residues Cys12–Cys32 and Cys48–Cys72. Phosphoserine is present on Ser94. One can recognise an NR LBD domain in the interval Ser99–Gly328. The interval Ile368–Ala390 is disordered. Residues Thr370 and Thr373 each carry the phosphothreonine modification. Phosphoserine is present on Ser377.

The protein belongs to the nuclear hormone receptor family. NR2 subfamily. In terms of tissue distribution, expressed in pancreas, kidney, small intestine and testis. Weakly expressed in colon. Not expressed in liver, skeletal muscle, lung, placenta, brain, heart, peripheral blood, ovary, prostate, thymus and spleen.

It is found in the nucleus. Transcription factor. Has a lower transcription activation potential than HNF4-alpha. This Homo sapiens (Human) protein is Hepatocyte nuclear factor 4-gamma (HNF4G).